We begin with the raw amino-acid sequence, 378 residues long: Microtubule-associated protein 6 homolog (378 aa).

The segment at 36–111 is disordered; it reads VTDGAQPPPP…YQPSEAPLER (76 aa). Positions 52 to 62 are enriched in polar residues; that stretch reads IETQPSLSDPY. Mn stretches follow at residues 79–99 and 112–135; these read SVMRQDYQAWKANPEPSCKPR and ETQYKKDFRSWPIPRQGDHPWIPK. Composition is skewed to basic and acidic residues over residues 203–220, 242–252, 265–274, and 306–315; these read KRESFMPKLPAKEPRATR, NEFRPWTDVKP, PEEKVVHETS, and PSKESSKVEK. Positions 203-378 are disordered; sequence KRESFMPKLP…INNKLAEAKE (176 aa). Residues 237 to 260 are mn 3; sequence GTSYRNEFRPWTDVKPVKPIKAKS. The span at 322–337 shows a compositional bias: basic residues; the sequence is KPKKTSTSHKPVKKAK. Over residues 359-378 the composition is skewed to basic and acidic residues; that stretch reads KPEEKEKSKEINNKLAEAKE.

This sequence belongs to the STOP family.

The protein resides in the cytoplasm. It localises to the cytoskeleton. In terms of biological role, involved in microtubule stabilization in many cell types, including neuronal cells. Specifically has microtubule cold stabilizing activity. Involved in dendrite morphogenesis and maintenance by regulating lysosomal trafficking. The protein is Microtubule-associated protein 6 homolog (map6) of Xenopus tropicalis (Western clawed frog).